Consider the following 316-residue polypeptide: uncharacterized protein (316 aa).

Belongs to the chlamydial CPn_0441/CT_007/TC_0275 family.

This is an uncharacterized protein from Chlamydia muridarum (strain MoPn / Nigg).